The chain runs to 358 residues: Phospho-N-acetylmuramoyl-pentapeptide-transferase (358 aa).

Helical transmembrane passes span Phe-24–Val-44, Thr-73–Leu-93, Asn-95–Asp-115, Met-134–Phe-154, Glu-169–Val-189, Gly-197–Ala-217, Gly-233–Trp-253, Val-261–Leu-281, Ile-286–Val-306, and Lys-335–Leu-355.

The protein belongs to the glycosyltransferase 4 family. MraY subfamily. Mg(2+) serves as cofactor.

It is found in the cell inner membrane. It catalyses the reaction UDP-N-acetyl-alpha-D-muramoyl-L-alanyl-gamma-D-glutamyl-meso-2,6-diaminopimeloyl-D-alanyl-D-alanine + di-trans,octa-cis-undecaprenyl phosphate = di-trans,octa-cis-undecaprenyl diphospho-N-acetyl-alpha-D-muramoyl-L-alanyl-D-glutamyl-meso-2,6-diaminopimeloyl-D-alanyl-D-alanine + UMP. The protein operates within cell wall biogenesis; peptidoglycan biosynthesis. In terms of biological role, catalyzes the initial step of the lipid cycle reactions in the biosynthesis of the cell wall peptidoglycan: transfers peptidoglycan precursor phospho-MurNAc-pentapeptide from UDP-MurNAc-pentapeptide onto the lipid carrier undecaprenyl phosphate, yielding undecaprenyl-pyrophosphoryl-MurNAc-pentapeptide, known as lipid I. This chain is Phospho-N-acetylmuramoyl-pentapeptide-transferase, found in Citrifermentans bemidjiense (strain ATCC BAA-1014 / DSM 16622 / JCM 12645 / Bem) (Geobacter bemidjiensis).